We begin with the raw amino-acid sequence, 250 residues long: MPKRDAPWLMAGTSKVSRSGNYSPSGGMGSKSNKANAWVNRPMYRKPRIYRMYKSPDVPKGCEGPCKVQSYEQRHDISHVGKVMCISDITRGNGITHRVGKRFCVKSVYILGKIWMDENIMLKNHTNSVIFWLVRDRRPYGTPMDFGQVFNMFDNEPSTATVKNDFRDRYQVMHRFNAKVSGGQYASNDQALVRRFWKVNNHVVYNHQEAGKYENHTENALLLYMACTHASNPVYATLKIRIYVYDSITN.

Residues 1 to 31 (MPKRDAPWLMAGTSKVSRSGNYSPSGGMGSK) form a disordered region. A Bipartite nuclear localization signal motif is present at residues 3-19 (KRDAPWLMAGTSKVSRS). Residues 14 to 31 (SKVSRSGNYSPSGGMGSK) show a composition bias toward polar residues. Residues 34 to 48 (KANAWVNRPMYRKPR) carry the Nuclear localization signal motif. A zinc finger lies at 53 to 70 (YKSPDVPKGCEGPCKVQS). The Nuclear export signal signature appears at 95 to 116 (ITHRVGKRFCVKSVYILGKIWM). The Bipartite nuclear localization signal motif lies at 194-241 (RRFWKVNNHVVYNHQEAGKYENHTENALLLYMACTHASNPVYATLKIR).

This sequence belongs to the geminiviridae capsid protein family. Homomultimer. Binds to single-stranded and double-stranded viral DNA. Interacts (via nuclear localization signals) with host importin alpha-1a.

Its subcellular location is the virion. The protein resides in the host nucleus. Functionally, encapsidates the viral DNA into characteristic twinned ('geminate') particles. Binds the genomic viral ssDNA and shuttles it into and out of the cell nucleus. The CP of bipartite geminiviruses is not required for cell-to-cell or systemic movement. This chain is Capsid protein, found in Bean golden yellow mosaic virus (isolate Puerto Rico) (BGYMV).